A 505-amino-acid polypeptide reads, in one-letter code: MAQIDFRKKINWHRRYRSPQGVKTEHEILRIFESDRGRIINSPAIRRLQQKTQVFPLERNAAVRTRLTHSMEVQQVGRYIAKEILSRLKELKLLEAYGLDELTGPFESIVEMSCLMHDIGNPPFGHFGEAAINDWFRQRLYPEDAESQPLTDDRCSVAALRLRDGEEPLNELRRKIRQDLCHFEGNAQGIRLVHTLMRMNLTWAQVGGILKYTRPAWWRGETPETHHYLMKKPGYYLSEEAYIARLRKELNLALYSRFPLTWIMEAADDISYCVADLEDAVEKRIFTVEQLYHHLHEAWGQHEKGSLFSLVVENAWEKSRSNSLSRSTEDQFFMYLRVNTLNKLVPYAAQRFIDNLPAIFAGTFNHALLEDASECSDLLKLYKNVAVKHVFSHPDVEQLELQGYRVISGLLEIYRPLLSLSLSDFTELVEKERVKRFPIESRLFHKLSTRHRLAYVEAVSKLPSDSPEFPLWEYYYRCRLLQDYISGMTDLYAWDEYRRLMAVEQ.

The HD domain maps to 66–273 (RLTHSMEVQQ…MEAADDISYC (208 aa)).

Belongs to the dGTPase family. Type 1 subfamily. Homotetramer. Mg(2+) serves as cofactor.

It carries out the reaction dGTP + H2O = 2'-deoxyguanosine + triphosphate + H(+). Functionally, dGTPase preferentially hydrolyzes dGTP over the other canonical NTPs. This Escherichia coli O139:H28 (strain E24377A / ETEC) protein is Deoxyguanosinetriphosphate triphosphohydrolase.